Here is a 59-residue protein sequence, read N- to C-terminus: Single-pass membrane and coiled-coil domain-containing protein 4 (59 aa).

The tract at residues 1-23 (MRQLKGKPKKETSKDKRERKQAM) is disordered. Residues 9 to 23 (KKETSKDKRERKQAM) are compositionally biased toward basic and acidic residues. A coiled-coil region spans residues 9 to 30 (KKETSKDKRERKQAMQDARKQV). A helical membrane pass occupies residues 32–52 (TVVLPTVAVVVLLIVFFVYAA).

This sequence belongs to the SMCO4 family.

Its subcellular location is the membrane. This is Single-pass membrane and coiled-coil domain-containing protein 4 (smco4) from Takifugu rubripes (Japanese pufferfish).